The following is a 203-amino-acid chain: Sperm-specific protein PHI-2B/PHI-3 (203 aa).

Residues 1–35 (MPSPSRKSRSRSRSRSKSPKRSPAKKARKTPKKPR) show a composition bias toward basic residues. Disordered regions lie at residues 1–46 (MPSP…PSTL) and 104–203 (KTSA…KSKK). The 80-residue stretch at 41 to 120 (KKPSTLSMIV…GATGSFRVGK (80 aa)) folds into the H15 domain. Composition is skewed to basic residues over residues 126-140 (KKAKKAKSPKKKSSK) and 147-203 (KAKK…KSKK).

Post-translationally, PL-II* and PL-IV are produced by post-translational cleavage of a common precursor. In terms of tissue distribution, sperm.

The protein localises to the nucleus. It is found in the chromosome. Functionally, linker histones are implicated in chromatin remodeling and/or transcriptional regulation during spermiogenesis, the process of spermatid maturation into spermatozoa. Protamines substitute for histones in the chromatin of sperm during the haploid phase of spermatogenesis. They compact sperm DNA into a highly condensed, stable and inactive complex. The sequence is that of Sperm-specific protein PHI-2B/PHI-3 from Mytilus trossulus (Blue mussel).